Here is a 118-residue protein sequence, read N- to C-terminus: Large ribosomal subunit protein bL20 (118 aa).

It belongs to the bacterial ribosomal protein bL20 family.

Functionally, binds directly to 23S ribosomal RNA and is necessary for the in vitro assembly process of the 50S ribosomal subunit. It is not involved in the protein synthesizing functions of that subunit. The protein is Large ribosomal subunit protein bL20 of Syntrophotalea carbinolica (strain DSM 2380 / NBRC 103641 / GraBd1) (Pelobacter carbinolicus).